Consider the following 180-residue polypeptide: Cytokinin-beta-glucosidase 2 (180 aa).

In terms of biological role, hydrolyzes cytokinin glucosides thus liberating free cytokinins. This Linaria vulgaris (Toadflax) protein is Cytokinin-beta-glucosidase 2 (ROLC2).